The chain runs to 435 residues: Histidine--tRNA ligase (435 aa).

Belongs to the class-II aminoacyl-tRNA synthetase family. As to quaternary structure, homodimer.

It localises to the cytoplasm. It catalyses the reaction tRNA(His) + L-histidine + ATP = L-histidyl-tRNA(His) + AMP + diphosphate + H(+). This chain is Histidine--tRNA ligase, found in Synechococcus elongatus (strain ATCC 33912 / PCC 7942 / FACHB-805) (Anacystis nidulans R2).